The following is a 608-amino-acid chain: Granule-bound starch synthase 1, chloroplastic/amyloplastic (608 aa).

The N-terminal 76 residues, 1 to 76 (MATITASHFV…EGGMAAGTIV (76 aa)), are a transit peptide targeting the chloroplast. Lys-96 is a binding site for ADP-alpha-D-glucose.

Belongs to the glycosyltransferase 1 family. Bacterial/plant glycogen synthase subfamily.

The protein localises to the plastid. It is found in the chloroplast. Its subcellular location is the amyloplast. The enzyme catalyses an NDP-alpha-D-glucose + [(1-&gt;4)-alpha-D-glucosyl](n) = [(1-&gt;4)-alpha-D-glucosyl](n+1) + a ribonucleoside 5'-diphosphate + H(+). Its pathway is glycan biosynthesis; starch biosynthesis. Required for the synthesis of amylose. In Ipomoea batatas (Sweet potato), this protein is Granule-bound starch synthase 1, chloroplastic/amyloplastic (WAXY).